A 1279-amino-acid chain; its full sequence is ATP-dependent helicase/nuclease subunit A (1279 aa).

The region spanning 4 to 499 (TKWTDEQRQA…VKLFKNFRSR (496 aa)) is the UvrD-like helicase ATP-binding domain. Residue 25-32 (AGAGAGKT) coordinates ATP. The UvrD-like helicase C-terminal domain maps to 526-853 (EEALKVGASY…RIMSIHKSKG (328 aa)).

Belongs to the helicase family. AddA subfamily. Heterodimer of AddA and AddB/RexB. The cofactor is Mg(2+).

It carries out the reaction Couples ATP hydrolysis with the unwinding of duplex DNA by translocating in the 3'-5' direction.. The enzyme catalyses ATP + H2O = ADP + phosphate + H(+). Functionally, the heterodimer acts as both an ATP-dependent DNA helicase and an ATP-dependent, dual-direction single-stranded exonuclease. Recognizes the chi site generating a DNA molecule suitable for the initiation of homologous recombination. The AddA nuclease domain is required for chi fragment generation; this subunit has the helicase and 3' -&gt; 5' nuclease activities. The sequence is that of ATP-dependent helicase/nuclease subunit A from Clostridium botulinum (strain 657 / Type Ba4).